Consider the following 264-residue polypeptide: MRGVLVTLAVLFLTGTQARSFWQHDEPQTPLDRIRDMVDVYLETVKASGKDAIAQFESSAVGKQLDLKLADNLDTLSAAAAKLREDMAPYYKEVREMWLKDTEALRAELTKDLEEVKEKIRPFLDQFSAKWTEELEQYRQRLTPVAQELKELTKQKVELMQAKLTPVAEEARDRLRGHVEELRKNLAPYSDELRQKLSQKLEEIREKGIPQASEYQAKVMEQLSNLREKMTPLVQEFRERLTPYAENLKNRLISFLDELQKSVA.

The N-terminal stretch at 1 to 18 (MRGVLVTLAVLFLTGTQA) is a signal peptide. Tandem repeats lie at residues 67–88 (LKLA…EDMA) and 89–110 (PYYK…AELT). A 10 X approximate tandem repeats region spans residues 67 to 264 (LKLADNLDTL…FLDELQKSVA (198 aa)). A 3; half-length repeat occupies 111–121 (KDLEEVKEKIR). Repeat copies occupy residues 122–143 (PFLD…QRLT), 144–165 (PVAQ…AKLT), 166–187 (PVAE…KNLA), 188–209 (PYSD…EKGI), and 210–231 (PQAS…EKMT). The stretch at 232 to 242 (PLVQEFRERLT) is one 9; half-length repeat. Repeat 10 spans residues 243 to 264 (PYAENLKNRLISFLDELQKSVA).

This sequence belongs to the apolipoprotein A1/A4/E family. Homodimer. As to expression, major protein of plasma HDL, also found in chylomicrons.

The protein localises to the secreted. Participates in the reverse transport of cholesterol from tissues to the liver for excretion by promoting cholesterol efflux from tissues and by acting as a cofactor for the lecithin cholesterol acyltransferase (LCAT). The polypeptide is Apolipoprotein A-I (APOA1) (Gallus gallus (Chicken)).